A 276-amino-acid chain; its full sequence is MELRTAASPKDVKHYTTDRLREEFLIDDLFKVNEIKLVYSHIDRIITGSAVPVNQELKLTAGDELRAEYFLQRREMGIINIGGKGTITIDGTVYELEYKDGMYIGMGAKDISFASVDATNPAKFYINSAPAHTSYPTVLIKPENCVNVELGSLEGSNHRVICKYILPGQVESCQLVMGMTQLKPGSVWNTMPCHTHDRRMEVYLYFDMQENDMVFHYMGEPTETRHIIMRNEQAVISPSWSIHSGCGTKAYTFIWGMVGENQDFDDMDACDLKDLR.

Zn(2+)-binding residues include H194, H196, E201, and H243.

The protein belongs to the KduI family. Zn(2+) is required as a cofactor.

The enzyme catalyses 5-dehydro-4-deoxy-D-glucuronate = 3-deoxy-D-glycero-2,5-hexodiulosonate. Its pathway is glycan metabolism; pectin degradation; 2-dehydro-3-deoxy-D-gluconate from pectin: step 4/5. Its function is as follows. Catalyzes the isomerization of 5-dehydro-4-deoxy-D-glucuronate to 3-deoxy-D-glycero-2,5-hexodiulosonate. The chain is 4-deoxy-L-threo-5-hexosulose-uronate ketol-isomerase from Lachnoclostridium phytofermentans (strain ATCC 700394 / DSM 18823 / ISDg) (Clostridium phytofermentans).